A 287-amino-acid chain; its full sequence is Protease HtpX (287 aa).

2 helical membrane-spanning segments follow: residues 4–24 and 33–53; these read IFLLIATNLAVLLVASIVMSI and GGLLVFAAIFGFGGAFISLAI. His139 is a Zn(2+) binding site. Glu140 is an active-site residue. His143 provides a ligand contact to Zn(2+). Transmembrane regions (helical) follow at residues 154 to 174 and 195 to 215; these read LIQGVVNTFVIFAARVVAGII and AVVFVLDMLFGILASIIVAYF. Glu220 is a binding site for Zn(2+).

The protein belongs to the peptidase M48B family. Zn(2+) is required as a cofactor.

The protein resides in the cell inner membrane. The protein is Protease HtpX of Shewanella sp. (strain ANA-3).